The primary structure comprises 519 residues: Serine/threonine-protein kinase RIO3 (519 aa).

Residues Ser8 and Ser112 each carry the phosphoserine modification. Residue Tyr122 is modified to Phosphotyrosine. The interval 122 to 159 (YEDSDSSEDEVDWQDTRDDPYRPAKPIPTPKKGFIGKG) is disordered. A compositionally biased stretch (acidic residues) spans 124 to 134 (DSDSSEDEVDW). Phosphoserine occurs at positions 125, 127, and 128. Residues 251–519 (ETITGCISTG…DGGPPILYDE (269 aa)) enclose the Protein kinase domain. Residues 257-265 (ISTGKESVV) and Lys290 contribute to the ATP site. Asp406 (proton acceptor) is an active-site residue.

This sequence belongs to the protein kinase superfamily. RIO-type Ser/Thr kinase family. Interacts with CASP10. Interacts with IRF3; RIOK3 probably mediates the interaction of TBK1 with IRF3. Associated with 40S pre-ribosomal particles. Mg(2+) serves as cofactor. Post-translationally, autophosphorylated (in vitro).

The protein resides in the cytoplasm. It catalyses the reaction L-seryl-[protein] + ATP = O-phospho-L-seryl-[protein] + ADP + H(+). It carries out the reaction L-threonyl-[protein] + ATP = O-phospho-L-threonyl-[protein] + ADP + H(+). Its function is as follows. Involved in regulation of type I interferon (IFN)-dependent immune response which plays a critical role in the innate immune response against DNA and RNA viruses. May act as an adapter protein essential for the recruitment of TBK1 to IRF3. Phosphorylates IFIH1 within the C-terminal region interfering with IFIH1 filament assembly on long dsRNA and resulting in attenuated IFIH1-signaling. Can inhibit CASP10 isoform 7-mediated activation of the NF-kappaB signaling pathway. May play a role in the biogenesis of the 40S ribosomal subunit. Involved in the processing of 21S pre-rRNA to the mature 18S rRNA. In Bos taurus (Bovine), this protein is Serine/threonine-protein kinase RIO3 (RIOK3).